The following is a 529-amino-acid chain: Protein PAT1 homolog 2 (529 aa).

The disordered stretch occupies residues glutamine 153–alanine 183.

This sequence belongs to the PAT1 family. Interacts with LSM1.

The protein resides in the cytoplasm. It localises to the nucleus. RNA-binding protein that acts as a translational repressor. This chain is Protein PAT1 homolog 2 (Patl2), found in Mus musculus (Mouse).